The following is a 310-amino-acid chain: 2-dehydro-3-deoxygluconokinase (310 aa).

Substrate-binding positions include 29–33 (GDTLN), Y89, 103–105 (YWR), and R171. ATP is bound by residues 169-171 (NYR), 229-234 (KRGADA), and 262-265 (AAGD). D265 is a substrate binding site. The active-site Proton acceptor is D265.

The protein belongs to the carbohydrate kinase PfkB family.

It carries out the reaction 2-dehydro-3-deoxy-D-gluconate + ATP = 2-dehydro-3-deoxy-6-phospho-D-gluconate + ADP + H(+). It functions in the pathway carbohydrate acid metabolism; 2-dehydro-3-deoxy-D-gluconate degradation; D-glyceraldehyde 3-phosphate and pyruvate from 2-dehydro-3-deoxy-D-gluconate: step 1/2. In terms of biological role, catalyzes the phosphorylation of 2-keto-3-deoxygluconate (KDG) to produce 2-keto-3-deoxy-6-phosphogluconate (KDPG). The protein is 2-dehydro-3-deoxygluconokinase of Dickeya dadantii (strain 3937) (Erwinia chrysanthemi (strain 3937)).